Here is a 478-residue protein sequence, read N- to C-terminus: Cytochrome P450 monooxygenase ATR3 (478 aa).

The helical transmembrane segment at 20–42 threads the bilayer; it reads AVAFVTASALYYVLPAAISHIQL. N-linked (GlcNAc...) asparagine glycans are attached at residues Asn-159 and Asn-268.

The protein belongs to the cytochrome P450 family. Heme serves as cofactor.

The protein resides in the membrane. Its pathway is mycotoxin biosynthesis. Functionally, cytochrome P450 monooxygenase; part of the core atranone cluster (CAC) which products are predicted to catalyze most or all steps of mycotoxin atranone synthesis, starting from geranylgeranyl pyrophosphate (GGPP). The initial cyclization of GGPP to dolabellane is probably performed by the terpene cyclase ATR13. The Baeyer-Villiger oxidation near the end of the atranone synthesis, which converts atranones D and E to atranones F and G is predicted to be catalyzed by the monooxygenase ATR8. Of the CAC's other predicted gene products, the reducing PKS ATR6 might synthesize a polyketide chain. This polyketide is probably transferred onto the atranone backbone by the polyketide transferase ATR5. Other predicted CAC products include 4 oxygenases (ATR2, ATR3, ATR4, and ATR14), 3 short-chain reductases (ATR7, ATR9, and ATR10), and a methyltransferase (ATR12). These may all be involved in the various steps of atranone biosynthesis, although their specific roles must await experimental determination. The sequence is that of Cytochrome P450 monooxygenase ATR3 from Stachybotrys chlorohalonatus (strain IBT 40285).